The sequence spans 344 residues: MTEPLKPRIDFDGPLEVDQNPKFRAQQTFDENQAQNFAPATLDEAQEEEGQVEAVMDAALRPKRSLWRKMVMGGLALFGASVVGQGVQWTMNACQTQDWVALGGCAAGALIIGAGVGSVVTEWRRLWRLRQRAHERDEARDLLHSHGTGKGRVFCEKLAQQAGIDQSHPALQRWYASIHETQNDREVVSLYAHLVQPVLDAQARREISRSAAESTLMIAVSPLALVDMAFIAWRNLRLINRIATLYGIELGYYSRLRLFKLVLLNIAFAGASELVREVGMDWMSQDLAARLSTRAAQGIGAGLLTARLGIKAMELCRPLPWIDDDKPRLGDFRRQLIGQVKETL.

Helical transmembrane passes span 70-90 (MVMG…VQWT), 100-120 (VALG…GSVV), and 213-233 (ESTL…FIAW).

This sequence belongs to the UPF0283 family.

The protein resides in the cell inner membrane. In Shigella dysenteriae serotype 1 (strain Sd197), this protein is UPF0283 membrane protein YcjF.